The chain runs to 160 residues: Oligoribonuclease (160 aa).

The 151-residue stretch at 8–158 (LIWIDLEMTG…YNKLKKKTLI (151 aa)) folds into the Exonuclease domain. The active site involves tyrosine 129.

Belongs to the oligoribonuclease family.

The protein resides in the cytoplasm. Functionally, 3'-to-5' exoribonuclease specific for small oligoribonucleotides. This chain is Oligoribonuclease (orn), found in Buchnera aphidicola subsp. Baizongia pistaciae (strain Bp).